Reading from the N-terminus, the 179-residue chain is Translation initiation factor IF-3 (179 aa).

It belongs to the IF-3 family. Monomer.

It is found in the cytoplasm. In terms of biological role, IF-3 binds to the 30S ribosomal subunit and shifts the equilibrium between 70S ribosomes and their 50S and 30S subunits in favor of the free subunits, thus enhancing the availability of 30S subunits on which protein synthesis initiation begins. This Buchnera aphidicola subsp. Acyrthosiphon pisum (strain 5A) protein is Translation initiation factor IF-3.